A 456-amino-acid chain; its full sequence is Adenylosuccinate synthetase isozyme 2 (456 aa).

Over residues 1-14 (MSISESSPAATSLP) the composition is skewed to polar residues. The tract at residues 1 to 24 (MSISESSPAATSLPNGDCGRPRAR) is disordered. GTP is bound by residues 39 to 45 (GDEGKGK) and 67 to 69 (GHT). The active-site Proton acceptor is the D40. Mg(2+) is bound by residues D40 and G67. D40 is a substrate binding site. IMP-binding positions include 40 to 43 (DEGK), 65 to 68 (NAGH), T162, R176, N255, T270, and R334. The active-site Proton donor is the H68. A substrate-binding site is contributed by 330–336 (VTTGRKR). Residues R336, 362-364 (KLD), and 444-447 (GVGK) each bind GTP.

The protein belongs to the adenylosuccinate synthetase family. Homodimer. Mg(2+) is required as a cofactor.

It is found in the cytoplasm. The protein localises to the mitochondrion. It carries out the reaction IMP + L-aspartate + GTP = N(6)-(1,2-dicarboxyethyl)-AMP + GDP + phosphate + 2 H(+). It participates in purine metabolism; AMP biosynthesis via de novo pathway; AMP from IMP: step 1/2. With respect to regulation, inhibited competitively by AMP and IMP and non-competitively by fructose 1,6-bisphosphate. In terms of biological role, plays an important role in the de novo pathway and in the salvage pathway of purine nucleotide biosynthesis. Catalyzes the first committed step in the biosynthesis of AMP from IMP. This Mus musculus (Mouse) protein is Adenylosuccinate synthetase isozyme 2 (Adss2).